Reading from the N-terminus, the 802-residue chain is Phenylalanine--tRNA ligase beta subunit (802 aa).

The tRNA-binding domain maps to 39–150; it reads AKALKPFTIA…ADAPIGAAYA (112 aa). The region spanning 400-475 is the B5 domain; sequence GDDRVIDFPV…RIYGVDKVPM (76 aa). Mg(2+) is bound by residues Asp453, Asp459, Glu462, and Glu463. Positions 708–801 constitute an FDX-ACB domain; that stretch reads SAFQPVSRDF…VTKKTGGTLR (94 aa).

Belongs to the phenylalanyl-tRNA synthetase beta subunit family. Type 1 subfamily. As to quaternary structure, tetramer of two alpha and two beta subunits. The cofactor is Mg(2+).

It localises to the cytoplasm. The catalysed reaction is tRNA(Phe) + L-phenylalanine + ATP = L-phenylalanyl-tRNA(Phe) + AMP + diphosphate + H(+). The polypeptide is Phenylalanine--tRNA ligase beta subunit (Bradyrhizobium diazoefficiens (strain JCM 10833 / BCRC 13528 / IAM 13628 / NBRC 14792 / USDA 110)).